Reading from the N-terminus, the 113-residue chain is Carrot ABA-induced in somatic embryos 3 (113 aa).

3 stretches are compositionally biased toward basic and acidic residues: residues 1–17, 32–52, and 65–77; these read MASG…RAKQ, EAQE…KEQL, and GETR…KEGY. Residues 1–113 form a disordered region; that stretch reads MASGQEKRSE…IDQSKFRTKS (113 aa).

Belongs to the small hydrophilic plant seed protein family. In terms of tissue distribution, expressed in embryogenic cells, somatic embryos and seeds at the later stages of development. Not detected in leaves.

In Daucus carota (Wild carrot), this protein is Carrot ABA-induced in somatic embryos 3.